The sequence spans 371 residues: Alanine dehydrogenase (371 aa).

Residues Arg-15 and Lys-75 each coordinate substrate. The active-site Proton donor/acceptor is the His-96. Residues Ser-134, Thr-178–Ala-179, Asp-198, Lys-203, Ser-220, Val-239–Leu-240, Ile-267–Asp-270, Arg-279, and Val-298–Met-301 contribute to the NAD(+) site. Asp-270 functions as the Proton donor/acceptor in the catalytic mechanism. Residues Glu-323 and His-327 each contribute to the Mg(2+) site.

It belongs to the AlaDH/PNT family. In terms of assembly, homohexamer. Trimer of dimers. Mg(2+) serves as cofactor.

It is found in the secreted. The enzyme catalyses L-alanine + NAD(+) + H2O = pyruvate + NH4(+) + NADH + H(+). Its pathway is amino-acid degradation; L-alanine degradation via dehydrogenase pathway; NH(3) and pyruvate from L-alanine: step 1/1. In terms of biological role, catalyzes the reversible reductive amination of pyruvate to L-alanine. However, since the physiological environment of M.tuberculosis has a neutral pH, it can be assumed that the enzyme catalyzes exclusively the formation of L-alanine. May play a role in cell wall synthesis as L-alanine is an important constituent of the peptidoglycan layer. The sequence is that of Alanine dehydrogenase (ald) from Mycobacterium tuberculosis (strain CDC 1551 / Oshkosh).